Reading from the N-terminus, the 446-residue chain is Bifunctional protein GlmU (446 aa).

The pyrophosphorylase stretch occupies residues 1-226 (MLAVAILAAG…PDEVNGINDR (226 aa)). Residues 7–10 (LAAG), lysine 21, glutamine 73, and 78–79 (GT) contribute to the UDP-N-acetyl-alpha-D-glucosamine site. Aspartate 103 is a binding site for Mg(2+). Residues glycine 140, glutamate 155, asparagine 170, and asparagine 224 each contribute to the UDP-N-acetyl-alpha-D-glucosamine site. Asparagine 224 serves as a coordination point for Mg(2+). A linker region spans residues 227–247 (CQLANCEALLQERLRNYWMKE). The segment at 248-446 (GVTFTDPASC…SKQLIKNGWQ (199 aa)) is N-acetyltransferase. UDP-N-acetyl-alpha-D-glucosamine-binding residues include arginine 329 and lysine 347. Histidine 359 acts as the Proton acceptor in catalysis. UDP-N-acetyl-alpha-D-glucosamine-binding residues include tyrosine 362 and asparagine 373. Acetyl-CoA-binding positions include alanine 376, 382–383 (NY), alanine 419, and arginine 436.

It in the N-terminal section; belongs to the N-acetylglucosamine-1-phosphate uridyltransferase family. This sequence in the C-terminal section; belongs to the transferase hexapeptide repeat family. In terms of assembly, homotrimer. Mg(2+) serves as cofactor.

The protein resides in the cytoplasm. It catalyses the reaction alpha-D-glucosamine 1-phosphate + acetyl-CoA = N-acetyl-alpha-D-glucosamine 1-phosphate + CoA + H(+). The catalysed reaction is N-acetyl-alpha-D-glucosamine 1-phosphate + UTP + H(+) = UDP-N-acetyl-alpha-D-glucosamine + diphosphate. It functions in the pathway nucleotide-sugar biosynthesis; UDP-N-acetyl-alpha-D-glucosamine biosynthesis; N-acetyl-alpha-D-glucosamine 1-phosphate from alpha-D-glucosamine 6-phosphate (route II): step 2/2. The protein operates within nucleotide-sugar biosynthesis; UDP-N-acetyl-alpha-D-glucosamine biosynthesis; UDP-N-acetyl-alpha-D-glucosamine from N-acetyl-alpha-D-glucosamine 1-phosphate: step 1/1. Its pathway is bacterial outer membrane biogenesis; LPS lipid A biosynthesis. Functionally, catalyzes the last two sequential reactions in the de novo biosynthetic pathway for UDP-N-acetylglucosamine (UDP-GlcNAc). The C-terminal domain catalyzes the transfer of acetyl group from acetyl coenzyme A to glucosamine-1-phosphate (GlcN-1-P) to produce N-acetylglucosamine-1-phosphate (GlcNAc-1-P), which is converted into UDP-GlcNAc by the transfer of uridine 5-monophosphate (from uridine 5-triphosphate), a reaction catalyzed by the N-terminal domain. The chain is Bifunctional protein GlmU from Prochlorococcus marinus (strain MIT 9313).